Consider the following 119-residue polypeptide: Ribonuclease P protein component (119 aa).

Belongs to the RnpA family. As to quaternary structure, consists of a catalytic RNA component (M1 or rnpB) and a protein subunit.

The catalysed reaction is Endonucleolytic cleavage of RNA, removing 5'-extranucleotides from tRNA precursor.. Functionally, RNaseP catalyzes the removal of the 5'-leader sequence from pre-tRNA to produce the mature 5'-terminus. It can also cleave other RNA substrates such as 4.5S RNA. The protein component plays an auxiliary but essential role in vivo by binding to the 5'-leader sequence and broadening the substrate specificity of the ribozyme. In Syntrophus aciditrophicus (strain SB), this protein is Ribonuclease P protein component.